Reading from the N-terminus, the 300-residue chain is Ankyrin repeat domain-containing protein 54 (300 aa).

The interval 1 to 27 (MAAAAGDADDEPRSGHSSSEGECAVAP) is disordered. N-acetylalanine is present on A2. Phosphoserine is present on residues S58 and S63. The Nuclear localization signal (NLS) signature appears at 99–117 (RRLGPTGKEVHALKRLRDS). 4 ANK repeats span residues 109–138 (HALK…DPCA), 142–171 (KGRT…DPNQ), 175–204 (LGNT…RVDA), and 208–244 (AGRT…IIHM). The interval 141-241 (DKGRTALHFA…EAVRLEVKQI (101 aa)) is LYN-binding. A Nuclear export signal (NES) motif is present at residues 283–293 (LLASFTSLSLQ).

Interacts (via ankyrin repeat region) with LYN (via SH3-domain) in an activation-independent status of LYN. Forms a multiprotein complex with LYN and HCLS1. Interacts with TSN2, VAV1, DBNL and LASP1.

Its subcellular location is the nucleus. The protein localises to the cytoplasm. It localises to the midbody. In terms of biological role, plays an important role in regulating intracellular signaling events associated with erythroid terminal differentiation. The sequence is that of Ankyrin repeat domain-containing protein 54 (ANKRD54) from Homo sapiens (Human).